We begin with the raw amino-acid sequence, 473 residues long: Probable transporter MCH2 (473 aa).

Topologically, residues 1–37 (MSEERHEDHHRDVENKLNLNGKDDINGNTSISIEVPD) are cytoplasmic. Residues 38 to 58 (GGYGWFILLAFILYNFSTWGA) traverse the membrane as a helical segment. Over 59–83 (NSGYAIYLAHYLENNTFAGGSKLDY) the chain is Extracellular. Asn72 carries an N-linked (GlcNAc...) asparagine glycan. A helical membrane pass occupies residues 84–105 (ASIGGLAFSCGLFFAPVITWLY). The Cytoplasmic segment spans residues 106-111 (HIFSIQ). Residues 112 to 135 (FIIGLGILFQGAALLLAAFSVTLW) form a helical membrane-spanning segment. Residues 136–141 (EIYLTQ) lie on the Extracellular side of the membrane. The chain crosses the membrane as a helical span at residues 142-163 (GVLIGFGLAFIFIPSVTLIPLW). The Cytoplasmic segment spans residues 164–169 (FRNKRS). The helical transmembrane segment at 170–186 (LASGIGTAGSGLGGIVF) threads the bilayer. Over 187-200 (NLGMQSILQKRGVK) the chain is Extracellular. The helical transmembrane segment at 201-220 (WALIAQCIICTSLSTIALML) threads the bilayer. Over 221–243 (TRTTHQGLRQHKRSYKFELLDYD) the chain is Cytoplasmic. The helical transmembrane segment at 244–268 (VLSNFAVWLLFGFVSFAMLGYVVLL) threads the bilayer. The Extracellular portion of the chain corresponds to 269–286 (YSLSDFTVSLGYTSKQGS). The helical transmembrane segment at 287-304 (YVSCMVSVGSLLGRPIVG) threads the bilayer. Residues 305–312 (HIADKYGS) lie on the Cytoplasmic side of the membrane. Residues 313–332 (LTVGMILHLVMAILCWAMWI) traverse the membrane as a helical segment. At 333–342 (PCKNLATAIA) the chain is on the extracellular side. A helical transmembrane segment spans residues 343-362 (FGLLVGSIMGTIWPTIASIV). The Cytoplasmic portion of the chain corresponds to 363–370 (TRIVGLQK). A helical membrane pass occupies residues 371 to 394 (LPGTFGSTWIFMAAFALVAPIIGL). The Extracellular portion of the chain corresponds to 395 to 408 (ELRSTDTNGNDYYR). A helical membrane pass occupies residues 409–433 (TAIFVGFAYFGVSLCQWLLRGFIIA). Residues 434–473 (RDEIAVREAYSADQNELHLNVKLSHMSKCLFRYKQLPRRV) are Cytoplasmic-facing.

This sequence belongs to the major facilitator superfamily. Monocarboxylate porter (TC 2.A.1.13) family.

It is found in the membrane. In terms of biological role, probable transporter. Does not act in the transport of monocarboxylic acids across the plasma membrane. In Saccharomyces cerevisiae (strain ATCC 204508 / S288c) (Baker's yeast), this protein is Probable transporter MCH2 (MCH2).